We begin with the raw amino-acid sequence, 411 residues long: Cladofulvin cluster transcriptional coactivator claA (411 aa).

Over residues 1 to 27 (MSDSLAGNGMRQNLNRSSTSSNHTGHA) the composition is skewed to polar residues. Residues 1–32 (MSDSLAGNGMRQNLNRSSTSSNHTGHAQNGRA) form a disordered region. The 71-residue stretch at 47–117 (LACQVQSLAC…DPGHIAHTAL (71 aa)) folds into the HTH iclR-type domain. The H-T-H motif DNA-binding region spans 77-96 (LHDVAELANVPASQLSRVVR).

The protein localises to the nucleus. In terms of biological role, transcriptional coactivator; part of the gene cluster that mediates the biosynthesis of cladofulvin, a conidial pigment not required for virulence but that plays a role in fitness and resistance to environmental stresses including UV light and low-temperature stress. With claE, coregulates the production of cladofulvin. The sequence is that of Cladofulvin cluster transcriptional coactivator claA from Passalora fulva (Tomato leaf mold).